A 115-amino-acid chain; its full sequence is Large ribosomal subunit protein bL19 (115 aa).

It belongs to the bacterial ribosomal protein bL19 family.

Its function is as follows. This protein is located at the 30S-50S ribosomal subunit interface and may play a role in the structure and function of the aminoacyl-tRNA binding site. In Streptococcus mutans serotype c (strain ATCC 700610 / UA159), this protein is Large ribosomal subunit protein bL19.